Here is a 210-residue protein sequence, read N- to C-terminus: Uracil phosphoribosyltransferase (210 aa).

5-phospho-alpha-D-ribose 1-diphosphate-binding positions include Arg-80, Arg-105, and Asp-132–Ser-140. Uracil is bound by residues Ile-195 and Gly-200 to Ala-202. Asp-201 lines the 5-phospho-alpha-D-ribose 1-diphosphate pocket.

The protein belongs to the UPRTase family. Mg(2+) is required as a cofactor.

It carries out the reaction UMP + diphosphate = 5-phospho-alpha-D-ribose 1-diphosphate + uracil. The protein operates within pyrimidine metabolism; UMP biosynthesis via salvage pathway; UMP from uracil: step 1/1. Allosterically activated by GTP. Functionally, catalyzes the conversion of uracil and 5-phospho-alpha-D-ribose 1-diphosphate (PRPP) to UMP and diphosphate. This Thermoanaerobacter pseudethanolicus (strain ATCC 33223 / 39E) (Clostridium thermohydrosulfuricum) protein is Uracil phosphoribosyltransferase.